The chain runs to 513 residues: Maturase K (513 aa).

The protein belongs to the intron maturase 2 family. MatK subfamily.

Its subcellular location is the plastid. The protein resides in the chloroplast. Its function is as follows. Usually encoded in the trnK tRNA gene intron. Probably assists in splicing its own and other chloroplast group II introns. The protein is Maturase K of Phaseolus vulgaris (Kidney bean).